Here is a 97-residue protein sequence, read N- to C-terminus: Defensin-like protein 196 (97 aa).

A signal peptide spans 1 to 28 (MAKMSALSIFAIFIILVLVIFEIPEIEA). Cystine bridges form between Cys33–Cys85, Cys46–Cys70, Cys55–Cys80, and Cys59–Cys82.

This sequence belongs to the DEFL family. Protease inhibitor I18 (RTI/MTI-2) subfamily.

The protein localises to the secreted. The polypeptide is Defensin-like protein 196 (ATTI4) (Arabidopsis thaliana (Mouse-ear cress)).